The chain runs to 507 residues: Histidine ammonia-lyase (507 aa).

A cross-link (5-imidazolinone (Ala-Gly)) is located at residues 143-145 (ASG). Ser-144 is subject to 2,3-didehydroalanine (Ser).

It belongs to the PAL/histidase family. Contains an active site 4-methylidene-imidazol-5-one (MIO), which is formed autocatalytically by cyclization and dehydration of residues Ala-Ser-Gly.

It is found in the cytoplasm. It catalyses the reaction L-histidine = trans-urocanate + NH4(+). Its pathway is amino-acid degradation; L-histidine degradation into L-glutamate; N-formimidoyl-L-glutamate from L-histidine: step 1/3. The polypeptide is Histidine ammonia-lyase (Alkaliphilus oremlandii (strain OhILAs) (Clostridium oremlandii (strain OhILAs))).